The following is an 86-amino-acid chain: UPF0473 protein Clos_1662 (86 aa).

This sequence belongs to the UPF0473 family.

In Alkaliphilus oremlandii (strain OhILAs) (Clostridium oremlandii (strain OhILAs)), this protein is UPF0473 protein Clos_1662.